The sequence spans 351 residues: Heat-inducible transcription repressor HrcA (351 aa).

It belongs to the HrcA family.

Its function is as follows. Negative regulator of class I heat shock genes (grpE-dnaK-dnaJ and groELS operons). Prevents heat-shock induction of these operons. In Acetivibrio thermocellus (strain ATCC 27405 / DSM 1237 / JCM 9322 / NBRC 103400 / NCIMB 10682 / NRRL B-4536 / VPI 7372) (Clostridium thermocellum), this protein is Heat-inducible transcription repressor HrcA.